The following is a 223-amino-acid chain: DNA mismatch repair protein MutH (223 aa).

It belongs to the MutH family.

The protein resides in the cytoplasm. In terms of biological role, sequence-specific endonuclease that cleaves unmethylated GATC sequences. It is involved in DNA mismatch repair. The chain is DNA mismatch repair protein MutH from Haemophilus influenzae (strain 86-028NP).